Reading from the N-terminus, the 251-residue chain is Phosphate import ATP-binding protein PstB 2 (251 aa).

One can recognise an ABC transporter domain in the interval 5–246; it reads ISAKDVHLSY…PKKQITSDYL (242 aa). 37–44 contacts ATP; sequence GPSGCGKS.

It belongs to the ABC transporter superfamily. Phosphate importer (TC 3.A.1.7) family. In terms of assembly, the complex is composed of two ATP-binding proteins (PstB), two transmembrane proteins (PstC and PstA) and a solute-binding protein (PstS).

Its subcellular location is the cell membrane. The enzyme catalyses phosphate(out) + ATP + H2O = ADP + 2 phosphate(in) + H(+). In terms of biological role, part of the ABC transporter complex PstSACB involved in phosphate import. Responsible for energy coupling to the transport system. The sequence is that of Phosphate import ATP-binding protein PstB 2 from Lactobacillus acidophilus (strain ATCC 700396 / NCK56 / N2 / NCFM).